The following is a 352-amino-acid chain: UDP-N-acetylglucosamine--N-acetylmuramyl-(pentapeptide) pyrophosphoryl-undecaprenol N-acetylglucosamine transferase (352 aa).

UDP-N-acetyl-alpha-D-glucosamine is bound by residues 11–13, Asn120, Arg161, Ser188, and Gln286; that span reads TGG.

This sequence belongs to the glycosyltransferase 28 family. MurG subfamily.

It localises to the cell inner membrane. The enzyme catalyses di-trans,octa-cis-undecaprenyl diphospho-N-acetyl-alpha-D-muramoyl-L-alanyl-D-glutamyl-meso-2,6-diaminopimeloyl-D-alanyl-D-alanine + UDP-N-acetyl-alpha-D-glucosamine = di-trans,octa-cis-undecaprenyl diphospho-[N-acetyl-alpha-D-glucosaminyl-(1-&gt;4)]-N-acetyl-alpha-D-muramoyl-L-alanyl-D-glutamyl-meso-2,6-diaminopimeloyl-D-alanyl-D-alanine + UDP + H(+). Its pathway is cell wall biogenesis; peptidoglycan biosynthesis. In terms of biological role, cell wall formation. Catalyzes the transfer of a GlcNAc subunit on undecaprenyl-pyrophosphoryl-MurNAc-pentapeptide (lipid intermediate I) to form undecaprenyl-pyrophosphoryl-MurNAc-(pentapeptide)GlcNAc (lipid intermediate II). The sequence is that of UDP-N-acetylglucosamine--N-acetylmuramyl-(pentapeptide) pyrophosphoryl-undecaprenol N-acetylglucosamine transferase from Prochlorococcus marinus (strain NATL1A).